Reading from the N-terminus, the 552-residue chain is Glutamine--tRNA ligase (552 aa).

The 'HIGH' region motif lies at proline 33 to histidine 43. Residues glutamate 34 to asparagine 36 and histidine 40 to serine 46 contribute to the ATP site. Residues aspartate 66 and tyrosine 210 each coordinate L-glutamine. ATP-binding positions include threonine 229, arginine 259–leucine 260, and methionine 267–lysine 269. The 'KMSKS' region signature appears at valine 266 to arginine 270.

The protein belongs to the class-I aminoacyl-tRNA synthetase family. Monomer.

It localises to the cytoplasm. The enzyme catalyses tRNA(Gln) + L-glutamine + ATP = L-glutaminyl-tRNA(Gln) + AMP + diphosphate. This chain is Glutamine--tRNA ligase, found in Clostridium perfringens (strain ATCC 13124 / DSM 756 / JCM 1290 / NCIMB 6125 / NCTC 8237 / Type A).